Consider the following 706-residue polypeptide: B-cell lymphoma 6 protein (706 aa).

The region spanning 32–99 (TDVVIVVSRE…MYTSRLNLRE (68 aa)) is the BTB domain. The disordered stretch occupies residues 317–349 (EPPNAPLNRKGLVSPQSPQKSDCQPNSPTESCS). Over residues 330-349 (SPQSPQKSDCQPNSPTESCS) the composition is skewed to polar residues. Ser333 and Ser343 each carry phosphoserine; by MAPK1. Ser361 bears the Phosphoserine mark. A required for interaction with NuRD complex and for transcriptional repressor activity region spans residues 376-379 (KKYK). Lys379 is subject to N6-acetyllysine. Position 404 is a phosphoserine (Ser404). The tract at residues 407–467 (AYTAPPACQP…PRSSSESHSP (61 aa)) is disordered. Residues 424–456 (DLQSPTKLSASGEDSTIPQASRLNNIVNRSMTG) are compositionally biased toward polar residues. Low complexity predominate over residues 457–466 (SPRSSSESHS). 6 consecutive C2H2-type zinc fingers follow at residues 518 to 541 (FFCN…LQTH), 546 to 568 (YKCD…KTVH), 574 to 596 (YRCN…TRIH), 602 to 624 (YKCE…VLIH), 630 to 652 (YPCE…LRIH), and 658 to 681 (YHCE…RQKH).

As to quaternary structure, homodimer. Interacts (via BTB domain) with the corepressors BCOR, NCOR1 and SMRT/NCOR2; the interactions are direct. Forms preferably ternary complexes with BCOR and SMRT/NCOR2 on target gene promoters but, on enhancer elements, interacts with SMRT/NCOR2 and HDAC3 to repress proximal gene expression. Interacts with histone deacetylases HDAC2, HDAC5 and HDAC9 (via the catalytic domain). Interacts with ZBTB7 and BCL6B. Interacts with SCF(FBXO11) complex; the interaction is independent of phosphorylation and promotes ubiquitination. Interacts (when phosphorylated) with PIN1; the interaction is required for BCL6 degradation upon genotoxic stress. Interacts with ZBTB17; inhibits ZBTB17 transcriptional activity. Interacts with CTBP1, autoinhibits its transcriptional expression. Interacts with NOTCH1 NCID and SIRT1; leads to a epigenetic repression of selective NOTCH1-target genes. Interacts (nor via BTB domain neither acetylated) with the NuRD complex components CHD4, HDAC1, MBD3 and MTA3; the interaction with MTA3 inhibits BCL6 acetylation and is required for BCL6 transpriptional repression. Post-translationally, phosphorylated by MAPK1 in response to antigen receptor activation at Ser-333 and Ser-343. Phosphorylated by ATM in response to genotoxic stress. Phosphorylation induces its degradation by ubiquitin/proteasome pathway. In terms of processing, polyubiquitinated. Polyubiquitinated by SCF(FBXO11), leading to its degradation by the proteasome. Ubiquitinated by the SCF(FBXL17) complex, leading to its degradation by the proteasome: ubiquitination by the SCF(FBXL17) complex takes place when aberrant BTB domain dimers are formed. Acetylated at Lys-379 by EP300 which inhibits the interaction with NuRD complex and the transcriptional repressor function. Deacetylated by HDAC- and SIR2-dependent pathways. In terms of tissue distribution, expressed in germinal center T- and B-cells and in primary immature dendritic cells.

It is found in the nucleus. Transcriptional repressor mainly required for germinal center (GC) formation and antibody affinity maturation which has different mechanisms of action specific to the lineage and biological functions. Forms complexes with different corepressors and histone deacetylases to repress the transcriptional expression of different subsets of target genes. Represses its target genes by binding directly to the DNA sequence 5'-TTCCTAGAA-3' (BCL6-binding site) or indirectly by repressing the transcriptional activity of transcription factors. In GC B-cells, represses genes that function in differentiation, inflammation, apoptosis and cell cycle control, also autoregulates its transcriptional expression and up-regulates, indirectly, the expression of some genes important for GC reactions, such as AICDA, through the repression of microRNAs expression, like miR155. An important function is to allow GC B-cells to proliferate very rapidly in response to T-cell dependent antigens and tolerate the physiological DNA breaks required for immunglobulin class switch recombination and somatic hypermutation without inducing a p53/TP53-dependent apoptotic response. In follicular helper CD4(+) T-cells (T(FH) cells), promotes the expression of T(FH)-related genes but inhibits the differentiation of T(H)1, T(H)2 and T(H)17 cells. Also required for the establishment and maintenance of immunological memory for both T- and B-cells. Suppresses macrophage proliferation through competition with STAT5 for STAT-binding motifs binding on certain target genes, such as CCL2 and CCND2. In response to genotoxic stress, controls cell cycle arrest in GC B-cells in both p53/TP53-dependedent and -independent manners. Besides, also controls neurogenesis through the alteration of the composition of NOTCH-dependent transcriptional complexes at selective NOTCH targets, such as HES5, including the recruitment of the deacetylase SIRT1 and resulting in an epigenetic silencing leading to neuronal differentiation. This is B-cell lymphoma 6 protein (BCL6) from Homo sapiens (Human).